We begin with the raw amino-acid sequence, 719 residues long: Phosphoribosylformylglycinamidine synthase subunit PurL (719 aa).

Residue His-45 is part of the active site. Residues Tyr-48 and Lys-87 each contribute to the ATP site. Glu-89 contributes to the Mg(2+) binding site. Substrate-binding positions include 90-93 (SHNH) and Arg-112. The Proton acceptor role is filled by His-91. Position 113 (Asp-113) interacts with Mg(2+). Substrate is bound at residue Gln-236. Position 264 (Asp-264) interacts with Mg(2+). Residue 308–310 (ESQ) coordinates substrate. ATP-binding residues include Asn-493 and Gly-530. Mg(2+) is bound at residue Asn-531. Ser-533 is a binding site for substrate.

Belongs to the FGAMS family. As to quaternary structure, monomer. Part of the FGAM synthase complex composed of 1 PurL, 1 PurQ and 2 PurS subunits.

The protein localises to the cytoplasm. The catalysed reaction is N(2)-formyl-N(1)-(5-phospho-beta-D-ribosyl)glycinamide + L-glutamine + ATP + H2O = 2-formamido-N(1)-(5-O-phospho-beta-D-ribosyl)acetamidine + L-glutamate + ADP + phosphate + H(+). It participates in purine metabolism; IMP biosynthesis via de novo pathway; 5-amino-1-(5-phospho-D-ribosyl)imidazole from N(2)-formyl-N(1)-(5-phospho-D-ribosyl)glycinamide: step 1/2. Its function is as follows. Part of the phosphoribosylformylglycinamidine synthase complex involved in the purines biosynthetic pathway. Catalyzes the ATP-dependent conversion of formylglycinamide ribonucleotide (FGAR) and glutamine to yield formylglycinamidine ribonucleotide (FGAM) and glutamate. The FGAM synthase complex is composed of three subunits. PurQ produces an ammonia molecule by converting glutamine to glutamate. PurL transfers the ammonia molecule to FGAR to form FGAM in an ATP-dependent manner. PurS interacts with PurQ and PurL and is thought to assist in the transfer of the ammonia molecule from PurQ to PurL. This Novosphingobium aromaticivorans (strain ATCC 700278 / DSM 12444 / CCUG 56034 / CIP 105152 / NBRC 16084 / F199) protein is Phosphoribosylformylglycinamidine synthase subunit PurL.